A 330-amino-acid chain; its full sequence is Small ribosomal subunit protein uS2 (330 aa).

It belongs to the universal ribosomal protein uS2 family.

This chain is Small ribosomal subunit protein uS2, found in Rhodopseudomonas palustris (strain BisA53).